Consider the following 101-residue polypeptide: NADH-quinone oxidoreductase subunit K (101 aa).

A run of 3 helical transmembrane segments spans residues 4-24 (LGHM…GIFL), 30-50 (IVLL…FVGF), and 62-82 (FVFF…AILV).

This sequence belongs to the complex I subunit 4L family. NDH-1 is composed of 14 different subunits. Subunits NuoA, H, J, K, L, M, N constitute the membrane sector of the complex.

It localises to the cell inner membrane. The catalysed reaction is a quinone + NADH + 5 H(+)(in) = a quinol + NAD(+) + 4 H(+)(out). In terms of biological role, NDH-1 shuttles electrons from NADH, via FMN and iron-sulfur (Fe-S) centers, to quinones in the respiratory chain. The immediate electron acceptor for the enzyme in this species is believed to be ubiquinone. Couples the redox reaction to proton translocation (for every two electrons transferred, four hydrogen ions are translocated across the cytoplasmic membrane), and thus conserves the redox energy in a proton gradient. The polypeptide is NADH-quinone oxidoreductase subunit K (Stenotrophomonas maltophilia (strain K279a)).